The chain runs to 649 residues: Putative cystathionine gamma-synthase YML082W (649 aa).

Positions 242–273 are disordered; that stretch reads NEANHGEDHDGGISGEVDSQEEPHNGLVSTIP. Ser287 bears the Phosphoserine mark. N6-(pyridoxal phosphate)lysine is present on Lys451.

It belongs to the trans-sulfuration enzymes family. MET7 subfamily. The cofactor is pyridoxal 5'-phosphate.

The catalysed reaction is O-succinyl-L-homoserine + L-cysteine = L,L-cystathionine + succinate + H(+). Its pathway is amino-acid biosynthesis; L-methionine biosynthesis via de novo pathway; L-cystathionine from O-succinyl-L-homoserine: step 1/1. Catalyzes the formation of L-cystathionine from O-succinyl-L-homoserine (OSHS) and L-cysteine, via a gamma-replacement reaction. In the absence of thiol, catalyzes gamma-elimination to form 2-oxobutanoate, succinate and ammonia. This is Putative cystathionine gamma-synthase YML082W from Saccharomyces cerevisiae (strain ATCC 204508 / S288c) (Baker's yeast).